We begin with the raw amino-acid sequence, 481 residues long: Molybdate-anion transporter (481 aa).

Transmembrane regions (helical) follow at residues 1–21 (MFVTAYLAFIVLAGLCVALEI), 47–67 (LFLKAYLLALWADWLQGPYLY), 80–100 (IAILYVCGLASCVLFAPVAGW), 131–151 (FMLILGRVLGGLSTSLLTTTF), 180–200 (WNYGLAVGAGLVANLFAEWLG), 201–221 (LGPVAPFLLAIPSLAACAWFV), 276–296 (VMLLGGVQALFESVLYIFVFL), 306–326 (PPLGIVFSSLMAATMAGSTLF), 341–361 (LLCLAILLAFFSFFMLTFSTV), 371–391 (LLAFLLLELACGLYFPAVSFL), 403–423 (AVLAWFRLPLHLLACLGLLAL), and 443–463 (FAGCAGMMLAALLAVISLFTV).

This sequence belongs to the major facilitator superfamily.

Its subcellular location is the cell membrane. In terms of biological role, mediates high-affinity intracellular uptake of the rare oligo-element molybdenum. This chain is Molybdate-anion transporter (mfsd5), found in Danio rerio (Zebrafish).